The sequence spans 294 residues: Cytidine deaminase (294 aa).

CMP/dCMP-type deaminase domains lie at 49–169 (TPQQ…FGPA) and 188–294 (ETQD…YIAL). 90–92 (NLE) serves as a coordination point for substrate. Histidine 103 serves as a coordination point for Zn(2+). Glutamate 105 serves as the catalytic Proton donor. Positions 130 and 133 each coordinate Zn(2+).

This sequence belongs to the cytidine and deoxycytidylate deaminase family. As to quaternary structure, homodimer. Requires Zn(2+) as cofactor.

The enzyme catalyses cytidine + H2O + H(+) = uridine + NH4(+). It catalyses the reaction 2'-deoxycytidine + H2O + H(+) = 2'-deoxyuridine + NH4(+). In terms of biological role, this enzyme scavenges exogenous and endogenous cytidine and 2'-deoxycytidine for UMP synthesis. The chain is Cytidine deaminase from Pasteurella multocida (strain Pm70).